Here is a 295-residue protein sequence, read N- to C-terminus: 5,10-methylenetetrahydrofolate reductase (295 aa).

The active-site Proton donor/acceptor is the E28. T59 serves as a coordination point for NADH. Residues H89, R119, G120, D121, A133, Y153, H157, A160, D166, N169, R172, and K173 each contribute to the FAD site. D121 contacts (6S)-5-methyl-5,6,7,8-tetrahydrofolate. Q184 lines the NADH pocket. (6S)-5-methyl-5,6,7,8-tetrahydrofolate is bound by residues Q184, Q220, and K280.

It belongs to the methylenetetrahydrofolate reductase family. FAD is required as a cofactor.

It catalyses the reaction (6S)-5-methyl-5,6,7,8-tetrahydrofolate + NAD(+) = (6R)-5,10-methylene-5,6,7,8-tetrahydrofolate + NADH + H(+). It functions in the pathway one-carbon metabolism; tetrahydrofolate interconversion. It participates in amino-acid biosynthesis; L-methionine biosynthesis via de novo pathway. In terms of biological role, catalyzes the NADH-dependent reduction of 5,10-methylenetetrahydrofolate to 5-methyltetrahydrofolate. Is required to provide the methyl group necessary for methionine synthetase to convert homocysteine to methionine; the methyl group is given by 5-methyltetrahydrofolate. The chain is 5,10-methylenetetrahydrofolate reductase (metF) from Buchnera aphidicola subsp. Baizongia pistaciae (strain Bp).